Reading from the N-terminus, the 376-residue chain is Cyclin-dependent kinase 9-B (376 aa).

The Protein kinase domain occupies Tyr19–Phe319. Residues Ile25–Val33 and Lys48 each bind ATP. Catalysis depends on Asp153, which acts as the Proton acceptor. The tract at residues Pro345–Phe376 is disordered. A compositionally biased stretch (low complexity) spans Pro354–Gln369.

Belongs to the protein kinase superfamily. CMGC Ser/Thr protein kinase family. CDC2/CDKX subfamily. In terms of assembly, associates with cyclin-T to form P-TEFb.

The protein resides in the nucleus. It catalyses the reaction L-seryl-[protein] + ATP = O-phospho-L-seryl-[protein] + ADP + H(+). It carries out the reaction L-threonyl-[protein] + ATP = O-phospho-L-threonyl-[protein] + ADP + H(+). The enzyme catalyses [DNA-directed RNA polymerase] + ATP = phospho-[DNA-directed RNA polymerase] + ADP + H(+). In terms of biological role, member of the cyclin-dependent kinase pair (CDK9/cyclin-T) complex, also called positive transcription elongation factor B (P-TEFb), which is proposed to facilitate the transition from abortive to production elongation by phosphorylating the CTD (C-terminal domain) of the large subunit of RNA polymerase II (RNAP II) and SUPT5H. The sequence is that of Cyclin-dependent kinase 9-B (cdk9-b) from Xenopus laevis (African clawed frog).